A 244-amino-acid chain; its full sequence is Methylthioribulose-1-phosphate dehydratase (244 aa).

Substrate is bound at residue C89. H107 and H109 together coordinate Zn(2+). E130 functions as the Proton donor/acceptor in the catalytic mechanism. A Zn(2+)-binding site is contributed by H192.

Belongs to the aldolase class II family. MtnB subfamily. It depends on Zn(2+) as a cofactor.

It is found in the cytoplasm. It catalyses the reaction 5-(methylsulfanyl)-D-ribulose 1-phosphate = 5-methylsulfanyl-2,3-dioxopentyl phosphate + H2O. Its pathway is amino-acid biosynthesis; L-methionine biosynthesis via salvage pathway; L-methionine from S-methyl-5-thio-alpha-D-ribose 1-phosphate: step 2/6. In terms of biological role, catalyzes the dehydration of methylthioribulose-1-phosphate (MTRu-1-P) into 2,3-diketo-5-methylthiopentyl-1-phosphate (DK-MTP-1-P). The protein is Methylthioribulose-1-phosphate dehydratase of Saccharomyces cerevisiae (strain YJM789) (Baker's yeast).